The chain runs to 405 residues: Phosphoglycerate kinase (405 aa).

Residues 24-26 (DFN), R40, 63-66 (HLGR), R122, and R162 contribute to the substrate site. ATP contacts are provided by residues K213, E332, and 361–364 (GGDS).

The protein belongs to the phosphoglycerate kinase family. As to quaternary structure, monomer.

The protein localises to the cytoplasm. It carries out the reaction (2R)-3-phosphoglycerate + ATP = (2R)-3-phospho-glyceroyl phosphate + ADP. Its pathway is carbohydrate degradation; glycolysis; pyruvate from D-glyceraldehyde 3-phosphate: step 2/5. The chain is Phosphoglycerate kinase from Corynebacterium diphtheriae (strain ATCC 700971 / NCTC 13129 / Biotype gravis).